The following is a 162-amino-acid chain: Proepiregulin (162 aa).

Positions 1–22 (METFPAAWVLALLCLGSHLLQA) are cleaved as a signal peptide. Positions 23–55 (VISTTVIPSCIPEESEDNCTALVQMEDDPRVAQ) are excised as a propeptide. N-linked (GlcNAc...) asparagine glycosylation occurs at N40. The EGF-like domain occupies 57-97 (LITKCSSDMDGYCLHGHCIYLVDMSEKYCRCEVGYTGLRCE). Disulfide bonds link C61–C74, C69–C85, and C87–C96. The propeptide at 102–162 (TVHQPLSREY…TSGGPGLPQV (61 aa)) is removed in mature form. A helical membrane pass occupies residues 113 to 133 (ALTVILVFLFLIVTAGSMYYF).

In terms of assembly, interacts with EGFR and ERBB4.

Its subcellular location is the secreted. The protein localises to the extracellular space. It is found in the cell membrane. Ligand of the EGF receptor/EGFR and ERBB4. Stimulates EGFR and ERBB4 tyrosine phosphorylation. Contributes to inflammation, wound healing, tissue repair, and oocyte maturation by regulating angiogenesis and vascular remodeling and by stimulating cell proliferation. The protein is Proepiregulin (Ereg) of Rattus norvegicus (Rat).